Consider the following 286-residue polypeptide: Mating type protein A-1 (286 aa).

Residues 40–95 (AAKKKVNGFMSFRSYYSPLFSQLPQKERSPFMTILWQHDPFHNEWNFMCSVYSSIR) constitute a DNA-binding region (alpha box).

The protein belongs to the MATALPHA1 family.

It is found in the nucleus. Required for expression of the heterokaryon incompatibility and sexual functions. This Neurospora africana protein is Mating type protein A-1 (MTA-1).